The sequence spans 154 residues: Superoxide dismutase [Cu-Zn] (154 aa).

His-47, His-49, and His-64 together coordinate Cu cation. Residues Cys-58 and Cys-147 are joined by a disulfide bond. His-64, His-72, His-81, and Asp-84 together coordinate Zn(2+). Residue His-121 coordinates Cu cation. Residue Arg-144 coordinates substrate.

This sequence belongs to the Cu-Zn superoxide dismutase family. In terms of assembly, homodimer. Requires Cu cation as cofactor. It depends on Zn(2+) as a cofactor.

It localises to the cytoplasm. The enzyme catalyses 2 superoxide + 2 H(+) = H2O2 + O2. Its function is as follows. Destroys radicals which are normally produced within the cells and which are toxic to biological systems. The chain is Superoxide dismutase [Cu-Zn] (SOD1) from Podospora anserina (Pleurage anserina).